A 689-amino-acid chain; its full sequence is Long-chain fatty acid transport protein 5 (689 aa).

The Cytoplasmic portion of the chain corresponds to 1-29; sequence MGIWKKLTLLLLLLLLVGLGQPPWPAAMA. The next 2 helical transmembrane spans lie at 30-50 and 55-75; these read LALRWFLGDPTCLVLLGLALL and ISSWMPHWLSLVGAALTLFLL. The Cytoplasmic portion of the chain corresponds to 76–689; the sequence is PLQPPPGLRW…QAVCEGTWNL (614 aa). 292-303 contacts AMP; sequence IFTSGTTGLPKP.

It belongs to the ATP-dependent AMP-binding enzyme family. Liver-specific (at protein level). In liver expressed in a periportal distribution.

It is found in the endoplasmic reticulum membrane. It localises to the microsome. The protein localises to the cell membrane. The enzyme catalyses a fatty acid(in) = a fatty acid(out). It carries out the reaction cholate + ATP + CoA = choloyl-CoA + AMP + diphosphate. The catalysed reaction is (25R)-3alpha,7alpha,12alpha-trihydroxy-5beta-cholestan-26-oate + ATP + CoA = (25R)-3alpha,7alpha,12alpha-trihydroxy-5beta-cholestan-26-oyl-CoA + AMP + diphosphate. It catalyses the reaction chenodeoxycholate + ATP + CoA = chenodeoxycholoyl-CoA + AMP + diphosphate. The enzyme catalyses deoxycholate + ATP + CoA = deoxycholoyl-CoA + AMP + diphosphate. It carries out the reaction lithocholate + ATP + CoA = lithocholoyl-CoA + AMP + diphosphate. The catalysed reaction is a very long-chain fatty acid + ATP + CoA = a very long-chain fatty acyl-CoA + AMP + diphosphate. It catalyses the reaction tetracosanoate + ATP + CoA = tetracosanoyl-CoA + AMP + diphosphate. The enzyme catalyses hexacosanoate + ATP + CoA = hexacosanoyl-CoA + AMP + diphosphate. It carries out the reaction a long-chain fatty acid + ATP + CoA = a long-chain fatty acyl-CoA + AMP + diphosphate. The catalysed reaction is octadecanoate + ATP + CoA = octadecanoyl-CoA + AMP + diphosphate. It catalyses the reaction eicosanoate + ATP + CoA = eicosanoyl-CoA + AMP + diphosphate. In terms of biological role, mediates the import of long-chain fatty acids (LCFA) by facilitating their transport across cell membranes. Also catalyzes the ATP-dependent formation of fatty acyl-CoA using LCFA and very-long-chain fatty acids (VLCFA) as substrates. Mainly functions as a bile acyl-CoA synthetase catalyzing the activation of bile acids via ATP-dependent formation of bile acid CoA thioesters which is necessary for their subsequent conjugation with glycine or taurine. Both primary bile acids (cholic acid and chenodeoxycholic acid) and secondary bile acids (deoxycholic acid and lithocholic acid) are the principal substrates. In vitro, activates 3-alpha,7-alpha,12-alpha-trihydroxy-5-beta-cholestanate ((25R)-3alpha,7alpha,12alpha-trihydroxy-5beta-cholestan-26-oate or THCA), the C27 precursor of cholic acid deriving from the de novo synthesis from cholesterol. Plays an important role in hepatic fatty acid uptake and bile acid reconjugation and recycling but not in de novo synthesis of bile acids. In Mus musculus (Mouse), this protein is Long-chain fatty acid transport protein 5 (Slc27a5).